We begin with the raw amino-acid sequence, 351 residues long: UDP-3-O-acylglucosamine N-acyltransferase (351 aa).

The Proton acceptor role is filled by His240.

It belongs to the transferase hexapeptide repeat family. LpxD subfamily. Homotrimer.

The catalysed reaction is a UDP-3-O-[(3R)-3-hydroxyacyl]-alpha-D-glucosamine + a (3R)-hydroxyacyl-[ACP] = a UDP-2-N,3-O-bis[(3R)-3-hydroxyacyl]-alpha-D-glucosamine + holo-[ACP] + H(+). The protein operates within bacterial outer membrane biogenesis; LPS lipid A biosynthesis. In terms of biological role, catalyzes the N-acylation of UDP-3-O-acylglucosamine using 3-hydroxyacyl-ACP as the acyl donor. Is involved in the biosynthesis of lipid A, a phosphorylated glycolipid that anchors the lipopolysaccharide to the outer membrane of the cell. In Pseudomonas fluorescens (strain SBW25), this protein is UDP-3-O-acylglucosamine N-acyltransferase.